The primary structure comprises 601 residues: MWRVARSAASTFRRTRRLSTAISAPCIVHKRGADILHDPWFNKDTGFPMTERDRLGLRGLLPPRVISFEQQYDRFMESFRSLEKNTEGQPDSVVSLAKWRILNRLHDRNETLYYRVLIDNIKDFAPIIYTPTVGLVCQNYSGLFRRPRGMYFSAKDKGEMMSMIFNWPSTQVDMIVLTDGSRILGLGDLGVQGIGIPIGKLDMYVAAAGINPQRVLPVMLDVGTNNQKLLEDPLYLGLRQPRLEGEEYLSIVDEFVEAVHARWPKAVVQFEDFQAKWAFETLDRYRKKFCMFNDDIQGTAGVALAGLLGTVRAQGRPLTDFANQKIVVVGAGSAGLGVLKMALQAVSRMTGPSADPHFFLLDKNGLITKDRKDIDPAALPFAKAHHEIEGLGLQEGAGLAEVVKKVKPHVLLGLSGVGGIFHEEVLRAMKESDSVRPAIFAMSNPTNNAECCPVDAFKLAGEDIVFASGSPFANVDLGNGKIGHVNQANNMYLFPGIGLGALLSGARNISDTMLEAAAECLASYMSDDEINRGILYPSIDDIRDITAEVGAAVLRAAVAEDLAEGHGDVGVKELQHMSKEETIEHVRQNMWYPVYGPLVHE.

A mitochondrion-targeting transit peptide spans 1 to 18 (MWRVARSAASTFRRTRRL). The active-site Proton donor is the tyrosine 129. Arginine 182 is an NAD(+) binding site. The active-site Proton acceptor is lysine 200. A divalent metal cation contacts are provided by glutamate 271, aspartate 272, and aspartate 295. 2 residues coordinate NAD(+): aspartate 295 and asparagine 444.

This sequence belongs to the malic enzymes family. In terms of assembly, heterodimer of two related subunits. It depends on Mg(2+) as a cofactor. Mn(2+) is required as a cofactor.

The protein localises to the mitochondrion matrix. The enzyme catalyses (S)-malate + NAD(+) = pyruvate + CO2 + NADH. This is NAD-dependent malic enzyme 59 kDa isoform, mitochondrial from Solanum tuberosum (Potato).